The following is a 35-amino-acid chain: MPTKRFDKKHWKMVVVLLAICGAMLLLRWAAMIWG.

Residues 14–34 (VVVLLAICGAMLLLRWAAMIW) form a helical membrane-spanning segment.

It is found in the membrane. This is an uncharacterized protein from Escherichia coli (strain K12).